A 452-amino-acid polypeptide reads, in one-letter code: Probable ECA polymerase (452 aa).

Helical transmembrane passes span 6–26 (FSGLLVVWLLSTLFIATLTWF), 37–57 (VFFSLLFLLTFFFGFPLTSVL), 63–83 (VGVAPPEILLQALLSAACFYG), 118–138 (VILMGIALVSVAIFFMHNGFL), 155–175 (GVALKRFFYFFIPAMLVVYFL), 181–201 (AWLFFLVSTVAFGLLTYMIVG), 207–227 (IIIAFAIFLFIGIIRGWISLW), 228–248 (MLAAAGVLGIVGMFWLALKRY), 341–361 (LVVMGGALFIPLGAIVVGLII), 378–398 (YKAAILHSFCFGAIFNMIVLA), and 410–430 (VFFLVVFGASLLVAKLLFWLF).

It belongs to the WzyE family. Probably part of a complex composed of WzxE, WzyE and WzzE.

The protein localises to the cell inner membrane. The protein operates within bacterial outer membrane biogenesis; enterobacterial common antigen biosynthesis. Functionally, probably involved in the polymerization of enterobacterial common antigen (ECA) trisaccharide repeat units. This Salmonella choleraesuis (strain SC-B67) protein is Probable ECA polymerase.